Reading from the N-terminus, the 239-residue chain is Proteasome activator complex subunit 2 (239 aa).

N-acetylalanine is present on A2. At S10 the chain carries Phosphoserine.

Belongs to the PA28 family. Heterodimer of PSME1 and PSME2, which forms a hexameric ring.

Its function is as follows. Implicated in immunoproteasome assembly and required for efficient antigen processing. The PA28 activator complex enhances the generation of class I binding peptides by altering the cleavage pattern of the proteasome. The polypeptide is Proteasome activator complex subunit 2 (PSME2) (Homo sapiens (Human)).